The sequence spans 209 residues: Thiamine-phosphate synthase (209 aa).

Residues 36-40 (QYRDK) and N68 contribute to the 4-amino-2-methyl-5-(diphosphooxymethyl)pyrimidine site. 2 residues coordinate Mg(2+): D69 and D87. Residue T106 participates in 4-amino-2-methyl-5-(diphosphooxymethyl)pyrimidine binding. 133–135 (SST) provides a ligand contact to 2-[(2R,5Z)-2-carboxy-4-methylthiazol-5(2H)-ylidene]ethyl phosphate. K136 provides a ligand contact to 4-amino-2-methyl-5-(diphosphooxymethyl)pyrimidine. Residue G163 participates in 2-[(2R,5Z)-2-carboxy-4-methylthiazol-5(2H)-ylidene]ethyl phosphate binding.

Belongs to the thiamine-phosphate synthase family. The cofactor is Mg(2+).

It catalyses the reaction 2-[(2R,5Z)-2-carboxy-4-methylthiazol-5(2H)-ylidene]ethyl phosphate + 4-amino-2-methyl-5-(diphosphooxymethyl)pyrimidine + 2 H(+) = thiamine phosphate + CO2 + diphosphate. The enzyme catalyses 2-(2-carboxy-4-methylthiazol-5-yl)ethyl phosphate + 4-amino-2-methyl-5-(diphosphooxymethyl)pyrimidine + 2 H(+) = thiamine phosphate + CO2 + diphosphate. It carries out the reaction 4-methyl-5-(2-phosphooxyethyl)-thiazole + 4-amino-2-methyl-5-(diphosphooxymethyl)pyrimidine + H(+) = thiamine phosphate + diphosphate. It participates in cofactor biosynthesis; thiamine diphosphate biosynthesis; thiamine phosphate from 4-amino-2-methyl-5-diphosphomethylpyrimidine and 4-methyl-5-(2-phosphoethyl)-thiazole: step 1/1. Condenses 4-methyl-5-(beta-hydroxyethyl)thiazole monophosphate (THZ-P) and 2-methyl-4-amino-5-hydroxymethyl pyrimidine pyrophosphate (HMP-PP) to form thiamine monophosphate (TMP). The chain is Thiamine-phosphate synthase from Pseudomonas aeruginosa (strain LESB58).